We begin with the raw amino-acid sequence, 675 residues long: UvrABC system protein B (675 aa).

The region spanning 32–417 is the Helicase ATP-binding domain; it reads EGLSDGLAYQ…EHAGQVVEQV (386 aa). 45–52 lines the ATP pocket; that stretch reads GVTGSGKT. The Beta-hairpin motif lies at 98 to 121; it reads YYDYYQPEAYVPSRDLFIEKDSAI. In terms of domain architecture, Helicase C-terminal spans 436 to 602; the sequence is QVDDLMSEIN…QIKKQVKDII (167 aa). Residues 634–669 form the UVR domain; the sequence is IKEIAKLEKAMQQAARDLQFEEAAVLRDRIRNIKEN.

The protein belongs to the UvrB family. Forms a heterotetramer with UvrA during the search for lesions. Interacts with UvrC in an incision complex.

It localises to the cytoplasm. The UvrABC repair system catalyzes the recognition and processing of DNA lesions. A damage recognition complex composed of 2 UvrA and 2 UvrB subunits scans DNA for abnormalities. Upon binding of the UvrA(2)B(2) complex to a putative damaged site, the DNA wraps around one UvrB monomer. DNA wrap is dependent on ATP binding by UvrB and probably causes local melting of the DNA helix, facilitating insertion of UvrB beta-hairpin between the DNA strands. Then UvrB probes one DNA strand for the presence of a lesion. If a lesion is found the UvrA subunits dissociate and the UvrB-DNA preincision complex is formed. This complex is subsequently bound by UvrC and the second UvrB is released. If no lesion is found, the DNA wraps around the other UvrB subunit that will check the other stand for damage. The chain is UvrABC system protein B from Neisseria meningitidis serogroup A / serotype 4A (strain DSM 15465 / Z2491).